Here is a 178-residue protein sequence, read N- to C-terminus: MSEVRLPPLRALDDFVLGSARLAAPDPGDPQRWCHRVINNLLYYQTNYLLCFGISLALAGYIRPLHTLLSALVVVVALGVLVWAAETRAAVRRCRRSHPAACLAAVLAISLFILWAVGGAFTFLLSITAPVFLILLHASLRLRNLKNKIENKIESIGLKRTPMGLLLEALGQEQEAGS.

Residues 1 to 41 (MSEVRLPPLRALDDFVLGSARLAAPDPGDPQRWCHRVINNL) are Cytoplasmic-facing. Residues 42-62 (LYYQTNYLLCFGISLALAGYI) form a helical membrane-spanning segment. Topologically, residues 63–64 (RP) are extracellular. Residues 65 to 85 (LHTLLSALVVVVALGVLVWAA) traverse the membrane as a helical segment. At 86–96 (ETRAAVRRCRR) the chain is on the cytoplasmic side. The chain crosses the membrane as a helical span at residues 97 to 119 (SHPAACLAAVLAISLFILWAVGG). The Extracellular portion of the chain corresponds to 120-122 (AFT). The helical transmembrane segment at 123–140 (FLLSITAPVFLILLHASL) threads the bilayer. At 141–178 (RLRNLKNKIENKIESIGLKRTPMGLLLEALGQEQEAGS) the chain is on the cytoplasmic side.

It belongs to the PRA1 family. In terms of assembly, interacts with CCR5 and GDE1.

It is found in the endosome membrane. May be involved in ER/Golgi transport and vesicular traffic. Plays a proapoptotic role in cerulenin-induced neuroblastoma apoptosis. This is PRA1 family protein 2 (Praf2) from Mus musculus (Mouse).